The following is a 286-amino-acid chain: Phosphoribosylaminoimidazole-succinocarboxamide synthase (286 aa).

Belongs to the SAICAR synthetase family.

It carries out the reaction 5-amino-1-(5-phospho-D-ribosyl)imidazole-4-carboxylate + L-aspartate + ATP = (2S)-2-[5-amino-1-(5-phospho-beta-D-ribosyl)imidazole-4-carboxamido]succinate + ADP + phosphate + 2 H(+). The protein operates within purine metabolism; IMP biosynthesis via de novo pathway; 5-amino-1-(5-phospho-D-ribosyl)imidazole-4-carboxamide from 5-amino-1-(5-phospho-D-ribosyl)imidazole-4-carboxylate: step 1/2. In Pasteurella multocida (strain Pm70), this protein is Phosphoribosylaminoimidazole-succinocarboxamide synthase (purC).